The sequence spans 1419 residues: Collagen alpha-1(II) chain (1419 aa).

The N-terminal stretch at 1–25 is a signal peptide; sequence MIRLGAPQSLVLLTLLIATVLQCQG. A propeptide spans 26-113 (N-terminal propeptide); it reads QDARKLGPKG…PGLGGGNFAA (88 aa). Positions 28–1168 are disordered; the sequence is ARKLGPKGQK…GQREKGPDPL (1141 aa). Composition is skewed to basic and acidic residues over residues 36 to 47 and 64 to 85; these read QKGEPGDIKDII and PRGD…RDGE. Residues 89 to 104 are compositionally biased toward pro residues; sequence PGNPGPPGPPGPPGPP. K122 is subject to 5-hydroxylysine. O-linked (Gal...) hydroxylysine glycosylation is present at K122. Residues 124 to 135 show a composition bias toward low complexity; the sequence is GGAQMGVMQGPM. The interval 133–1146 is triple-helical region; the sequence is GPMGPMGPRG…PGPPGPPGPP (1014 aa). The span at 140-149 shows a compositional bias: pro residues; sequence PRGPPGPAGA. Residues 150–171 show a composition bias toward low complexity; sequence PGPQGFQGNPGEPGEPGVSGPI. Over residues 183-197 the composition is skewed to basic and acidic residues; sequence PGDDGEAGKPGKAGE. 3 positions are modified to 5-hydroxylysine: K219, K231, and K240. O-linked (Gal...) hydroxylysine glycans are attached at residues K219, K231, and K240. 2 stretches are compositionally biased toward low complexity: residues 242–252 and 267–282; these read ESGSPGENGSP and TGPA…DGQP. A compositionally biased stretch (gly residues) spans 292-301; sequence GPAGGPGFLG. 5-hydroxylysine is present on K306. O-linked (Gal...) hydroxylysine glycosylation is present at K306. Positions 335–363 are enriched in low complexity; it reads PAGASGNPGTDGIPGAKGSAGAPGIAGAP. Residues 365–374 are compositionally biased toward pro residues; that stretch reads FPGPRGPPGP. Residues 404–417 show a composition bias toward low complexity; it reads ETGPAGPQGAPGPA. 2 positions are modified to 5-hydroxylysine: K540 and K552. O-linked (Gal...) hydroxylysine glycans are attached at residues K540 and K552. Low complexity predominate over residues 554–563; it reads LAGAPGLRGL. 4-hydroxyproline is present on residues P591 and P600. Residue P602 is modified to 3-hydroxyproline; partial. P603 and P606 each carry 4-hydroxyproline. Positions 638–668 are enriched in low complexity; that stretch reads ERGSPGAQGLQGPRGLPGTPGTDGPKGAAGP. Residues 696-707 show a composition bias toward basic and acidic residues; sequence KGDRGDVGEKGP. 2 stretches are compositionally biased toward low complexity: residues 765–780 and 809–846; these read AGFA…PGAK and PTGV…NGNP. P839 bears the 3-hydroxyproline; partial mark. 4-hydroxyproline is present on residues P840, P846, and P852. Positions 1001-1011 are enriched in pro residues; sequence APGPPGSPGPA. Residues 1047-1061 are compositionally biased toward basic and acidic residues; it reads RGDKGEAGEPGERGL. The residue at position 1076 (P1076) is a 3-hydroxyproline; partial. 2 stretches are compositionally biased toward low complexity: residues 1080–1089 and 1103–1113; these read SGDQGTSGPA and PSGKDGSNGIP. P1113 carries the post-translational modification 4-hydroxyproline. At P1118 the chain carries 3-hydroxyproline. A 4-hydroxyproline modification is found at P1119. Residues 1131-1148 show a composition bias toward pro residues; it reads AGPPGNPGPPGPPGPPGP. P1133 is modified (3-hydroxyproline; partial). Residues P1134 and P1137 each carry the 4-hydroxyproline modification. P1139 bears the 3-hydroxyproline; partial mark. A 4-hydroxyproline mark is found at P1140 and P1143. 3-hydroxyproline; partial is present on P1145. Residue P1146 is modified to 4-hydroxyproline. Residues 1147-1173 are nonhelical region (C-terminal); sequence GPGIDMSAFAGLGQREKGPDPLQYMRA. In terms of domain architecture, Fibrillar collagen NC1 spans 1185–1419; it reads VEVDATLKSL…GVDIGPVCFL (235 aa). Cystine bridges form between C1215/C1247, C1255/C1417, and C1325/C1370. Ca(2+)-binding residues include D1233, N1235, Q1236, C1238, and D1241. N1320 is a glycosylation site (N-linked (GlcNAc...) asparagine).

It belongs to the fibrillar collagen family. In terms of assembly, homotrimers of alpha 1(II) chains. Contains mostly 4-hydroxyproline. Prolines at the third position of the tripeptide repeating unit (G-X-P) are 4-hydroxylated in some or all of the chains. Post-translationally, contains 3-hydroxyproline at a few sites. This modification occurs on the first proline residue in the sequence motif Gly-Pro-Hyp, where Hyp is 4-hydroxyproline. In terms of processing, lysine residues at the third position of the tripeptide repeating unit (G-X-Y) are 5-hydroxylated in some or all of the chains. O-glycosylated on hydroxylated lysine residues. The O-linked glycan consists of a Glc-Gal disaccharide. In terms of tissue distribution, expressed in chondrocytes.

Its subcellular location is the secreted. It localises to the extracellular space. The protein resides in the extracellular matrix. In terms of biological role, type II collagen is specific for cartilaginous tissues. It is essential for the normal embryonic development of the skeleton, for linear growth and for the ability of cartilage to resist compressive forces. This Rattus norvegicus (Rat) protein is Collagen alpha-1(II) chain.